The sequence spans 413 residues: Gamma-lactamase FDB1 (413 aa).

7 residues coordinate Zn(2+): His-126, His-128, Asp-130, His-131, His-211, Asp-235, and His-323.

The protein belongs to the metallo-beta-lactamase superfamily.

It participates in xenobiotic degradation. Functionally, gamma-lactamase; part of the Fusarium detoxification of benzoxazolinone cluster involved in the degradation of benzoxazolinones produced by the host plant. Maize, wheat, and rye produce the 2 benzoxazinone phytoanticipins 2,4-dihy-droxy-7-methoxy-1,4-benzoxazin-3-one (DIMBOA) and 2,4-dihydroxy-1,4-benzoxazin-3-one (DIBOA) that, due to their inherent instability once released, spontaneously degrade to the more stable corresponding benzoxazolinones, 6-methoxy-2-benzoxazolinone (MBOA) and 2-benzoxazolinone (BOA), respectively. The first step in the detoxification of benzoxazolinones involves the hydrolysis of the cyclic ester bond of benzoxazolinones by the gamma-lactamase FDB1 to aminophenols. FDB1 is able to convert BOA into 2-aminophenol (2-AP), as well as MBOA into 5-methoxy-2-aminophenol (2-AMP). The N-malonyltransferase FDB2 then metabolizes aminophenols via N-malonylation to non-toxic malonamic acids. FDB2 converts 2-AP into N-(2-hydroxyphenyl) malonamic acid (HPMA) and 2-AMP into N-(2-hydroxy-4-methoxyphenyl) malonamic acid (HMPMA). The cluster also contains 2 transcription factors (FDB3 and FPSE_08121), an aldo-keto reductase (FPSE_08125) that possibly associates with a ketone component of BOA and MBOA degradation, an esterase (FPSE_08126), an acyl-CoA transferase (FPSE_08120), a solute carrier protein (FPSE_08119) and a transmembrane transporter (FPSE_08127) proposed to shuttle metabolites of benzoxazolinone degradation. The chain is Gamma-lactamase FDB1 from Fusarium pseudograminearum (strain CS3096) (Wheat and barley crown-rot fungus).